Here is a 263-residue protein sequence, read N- to C-terminus: Oxygen-evolving enhancer protein 2, chloroplastic (263 aa).

The transit peptide at 1–78 (MAAASCFHAL…VGTKVSPADA (78 aa)) directs the protein to the chloroplast. The span at 14–30 (ARSSSSSLQSSSSRLPA) shows a compositional bias: low complexity. Positions 14–34 (ARSSSSSLQSSSSRLPAPIKP) are disordered.

Belongs to the PsbP family.

It localises to the plastid. The protein resides in the chloroplast thylakoid membrane. Functionally, may be involved in the regulation of photosystem II. This is Oxygen-evolving enhancer protein 2, chloroplastic from Helianthus annuus (Common sunflower).